Consider the following 426-residue polypeptide: Elongation factor 1-alpha (426 aa).

Positions 5–221 (KPHINLAVIG…NALKEPEKPT (217 aa)) constitute a tr-type G domain. The segment at 14-21 (GHIDHGKS) is G1. 14-21 (GHIDHGKS) serves as a coordination point for GTP. Residue S21 participates in Mg(2+) binding. The segment at 70 to 74 (GITID) is G2. The G3 stretch occupies residues 91-94 (DCPG). GTP is bound by residues 91–95 (DCPGH) and 146–149 (NKMD). The tract at residues 146 to 149 (NKMD) is G4. Residues 185-187 (SAF) form a G5 region.

The protein belongs to the TRAFAC class translation factor GTPase superfamily. Classic translation factor GTPase family. EF-Tu/EF-1A subfamily.

The protein localises to the cytoplasm. The enzyme catalyses GTP + H2O = GDP + phosphate + H(+). Functionally, GTP hydrolase that promotes the GTP-dependent binding of aminoacyl-tRNA to the A-site of ribosomes during protein biosynthesis. The chain is Elongation factor 1-alpha from Methanocella arvoryzae (strain DSM 22066 / NBRC 105507 / MRE50).